The chain runs to 185 residues: Peptidyl-tRNA hydrolase (185 aa).

TRNA is bound at residue Tyr14. His19 (proton acceptor) is an active-site residue. Positions 64, 66, and 112 each coordinate tRNA.

It belongs to the PTH family. In terms of assembly, monomer.

It localises to the cytoplasm. The catalysed reaction is an N-acyl-L-alpha-aminoacyl-tRNA + H2O = an N-acyl-L-amino acid + a tRNA + H(+). Functionally, hydrolyzes ribosome-free peptidyl-tRNAs (with 1 or more amino acids incorporated), which drop off the ribosome during protein synthesis, or as a result of ribosome stalling. Its function is as follows. Catalyzes the release of premature peptidyl moieties from peptidyl-tRNA molecules trapped in stalled 50S ribosomal subunits, and thus maintains levels of free tRNAs and 50S ribosomes. In Lacticaseibacillus paracasei (strain ATCC 334 / BCRC 17002 / CCUG 31169 / CIP 107868 / KCTC 3260 / NRRL B-441) (Lactobacillus paracasei), this protein is Peptidyl-tRNA hydrolase.